The following is a 202-amino-acid chain: Ribosome maturation factor RimP (202 aa).

It belongs to the RimP family.

The protein localises to the cytoplasm. In terms of biological role, required for maturation of 30S ribosomal subunits. The chain is Ribosome maturation factor RimP from Paracidovorax citrulli (strain AAC00-1) (Acidovorax citrulli).